The chain runs to 213 residues: Large ribosomal subunit protein uL3 (213 aa).

Position 151 is an N5-methylglutamine (Gln-151).

It belongs to the universal ribosomal protein uL3 family. In terms of assembly, part of the 50S ribosomal subunit. Forms a cluster with proteins L14 and L19. In terms of processing, methylated by PrmB.

Its function is as follows. One of the primary rRNA binding proteins, it binds directly near the 3'-end of the 23S rRNA, where it nucleates assembly of the 50S subunit. This is Large ribosomal subunit protein uL3 from Rhizobium etli (strain ATCC 51251 / DSM 11541 / JCM 21823 / NBRC 15573 / CFN 42).